A 350-amino-acid chain; its full sequence is Bifunctional nitrilase/nitrile hydratase NIT4B (350 aa).

The region spanning 30–302 (VRATVVQAST…EALISADLDL (273 aa)) is the CN hydrolase domain. Glu70 (proton acceptor) is an active-site residue. Residue Lys157 is part of the active site. Cys191 acts as the Nucleophile in catalysis.

This sequence belongs to the carbon-nitrogen hydrolase superfamily. Nitrilase family. As to expression, highly expressed in leaves and cotyledons, lower expression in stems and roots.

The enzyme catalyses L-asparagine = 3-cyano-L-alanine + H2O. It carries out the reaction 3-cyano-L-alanine + 2 H2O = L-aspartate + NH4(+). Functionally, involved in the cyanide detoxification pathway. Has nitrilase and nitrile-hydratase activity in the ratio 3.3:1, producing both asparagine and aspartic acid from beta-cyano-L-alanine (Ala(CN)). Can also use 3-phenylpropionitrile as substrate, but not indole-3-acetonitrile. In Lupinus angustifolius (Narrow-leaved blue lupine), this protein is Bifunctional nitrilase/nitrile hydratase NIT4B (NIT4B).